The following is a 342-amino-acid chain: Methionyl-tRNA formyltransferase (342 aa).

Ser110 to Pro113 contacts (6S)-5,6,7,8-tetrahydrofolate.

This sequence belongs to the Fmt family.

The enzyme catalyses L-methionyl-tRNA(fMet) + (6R)-10-formyltetrahydrofolate = N-formyl-L-methionyl-tRNA(fMet) + (6S)-5,6,7,8-tetrahydrofolate + H(+). Its function is as follows. Attaches a formyl group to the free amino group of methionyl-tRNA(fMet). The formyl group appears to play a dual role in the initiator identity of N-formylmethionyl-tRNA by promoting its recognition by IF2 and preventing the misappropriation of this tRNA by the elongation apparatus. The protein is Methionyl-tRNA formyltransferase of Synechococcus sp. (strain CC9311).